Here is an 870-residue protein sequence, read N- to C-terminus: Linoleate 9S-lipoxygenase 2 (870 aa).

Positions 32–158 (NDFGATVIDG…KYRYNRVFFS (127 aa)) constitute a PLAT domain. The Lipoxygenase domain maps to 161 to 870 (TSLPSKMPAA…ARGIPNSISI (710 aa)). The disordered stretch occupies residues 203-243 (YNDLGEPDSGNPRPVLGGSPDRPYPRRGRTGRKPTKTDPTA). Positions 227 to 236 (PRRGRTGRKP) are enriched in basic residues. The Fe cation site is built by histidine 525, histidine 530, histidine 716, asparagine 720, and isoleucine 870.

It belongs to the lipoxygenase family. As to quaternary structure, monomer. The cofactor is Fe cation.

The protein localises to the cytoplasm. The enzyme catalyses (9Z,12Z)-octadecadienoate + O2 = (9S)-hydroperoxy-(10E,12Z)-octadecadienoate. The protein operates within lipid metabolism; oxylipin biosynthesis. Plant lipoxygenase may be involved in a number of diverse aspects of plant physiology including growth and development, pest resistance, and senescence or responses to wounding. Catalyzes the hydroperoxidation of lipids containing a cis,cis-1,4-pentadiene structure. This chain is Linoleate 9S-lipoxygenase 2 (LOX1.1), found in Oryza sativa subsp. japonica (Rice).